Here is a 531-residue protein sequence, read N- to C-terminus: MANPTHSQVVAAPDSSGRLLRLVSASSVMMQLLGKSTNIRMSQILEHHEDEDFSAHRTKIVCTMGPSCWDVDKMVQLIDAGMNVCRLNFSHGDHEAHGRVVKNLQEALKQRPGKRVALLLDTKGPEIRTGMLEGDKPIELHAGDMLKIVTDYSFVGNKSCIACSYEKLPSSVKPGNTILIADGSLSVEVVECGKDYVMTRVMNPAIIGNKKNMNLPGVKVDLPVIGEKDKNDILNFGIPMGCNFIAASFVQSADDVRYIRSILGTKGRNIKIIPKIENVEGLLNFDEILQEADGIMIARGDLGMEIPPEKVFLAQKMMISKCNVAGKPVITATQMLESMTKNPRPTRAEAADVANAVLDGTDCVMLSGETANGSFPVQAVTVMSRVCFEAEGCIDYQQVFRATCQATMTPIDTQEAVARAAVETAQSINASLILALTETGRTARLIAKYRPMQPILALSASEETIKQLQVIRGVTTFLVPTFQGTDQLIRNALSAAKELQLVSEGDSIVAVHGIKEEVAGWSNLLKVLVVE.

R86 serves as a coordination point for substrate. Residues N88, S90, D121, and T122 each contribute to the K(+) site. 88 to 91 serves as a coordination point for ATP; that stretch reads NFSH. ATP-binding residues include R128 and K211. Mg(2+) is bound at residue E277. G300, D301, and T333 together coordinate substrate. D301 lines the Mg(2+) pocket.

It belongs to the pyruvate kinase family. In terms of assembly, homotetramer. It depends on Mg(2+) as a cofactor. The cofactor is K(+).

The catalysed reaction is pyruvate + ATP = phosphoenolpyruvate + ADP + H(+). The protein operates within carbohydrate degradation; glycolysis; pyruvate from D-glyceraldehyde 3-phosphate: step 5/5. The polypeptide is Pyruvate kinase (PYK) (Eimeria tenella (Coccidian parasite)).